A 65-amino-acid chain; its full sequence is APLEPVYPGDDATPEQMAQYAAELRRYINMLTRPRYGKRDEEDLLDLKCSSLHAAAPRELSPMGA.

Tyr36 carries the post-translational modification Tyrosine amide. A propeptide spanning residues 59-65 (ELSPMGA) is cleaved from the precursor.

Belongs to the NPY family.

The protein localises to the secreted. In terms of biological role, hormone secreted by pancreatic cells that acts as a regulator of pancreatic and gastrointestinal functions probably by signaling through the G protein-coupled receptor NPY4R2. This Sus scrofa (Pig) protein is Pancreatic polypeptide prohormone (PPY).